A 481-amino-acid chain; its full sequence is Argininosuccinate lyase (481 aa).

It belongs to the lyase 1 family. Argininosuccinate lyase subfamily.

It is found in the cytoplasm. It carries out the reaction 2-(N(omega)-L-arginino)succinate = fumarate + L-arginine. It functions in the pathway amino-acid biosynthesis; L-arginine biosynthesis; L-arginine from L-ornithine and carbamoyl phosphate: step 3/3. The chain is Argininosuccinate lyase from Methanococcus maripaludis (strain C6 / ATCC BAA-1332).